The chain runs to 241 residues: Core protein D3 homolog (241 aa).

Belongs to the chordopoxvirinae D3 family.

The protein resides in the virion. Functionally, late protein which is part of a large complex required for early virion morphogenesis. This complex participates in the formation of virosomes and the incorporation of virosomal contents into nascent immature virions. The protein is Core protein D3 homolog of Oryctolagus cuniculus (Rabbit).